Here is a 470-residue protein sequence, read N- to C-terminus: Acetyl-CoA decarbonylase/synthase complex subunit beta 2 (470 aa).

[Ni-Fe-S] cluster contacts are provided by Cys-189, Cys-192, Cys-278, and Cys-280.

It belongs to the CdhC family. Monomer. The ACDS complex is made up of alpha, epsilon, beta, gamma and delta chains with a probable stoichiometry of (alpha(2)epsilon(2))(4)-beta(8)-(gamma(1)delta(1))(8) (Potential). [Ni-Fe-S] cluster is required as a cofactor.

It carries out the reaction Co(I)-[corrinoid Fe-S protein] + acetyl-CoA + H(+) = methyl-Co(III)-[corrinoid Fe-S protein] + CO + CoA. It participates in one-carbon metabolism; methanogenesis from acetate. Part of a complex that catalyzes the reversible cleavage of acetyl-CoA, allowing growth on acetate as sole source of carbon and energy. The alpha-epsilon complex generates CO from CO(2), while the beta subunit (this protein) combines the CO with CoA and a methyl group to form acetyl-CoA. The methyl group, which is incorporated into acetyl-CoA, is transferred to the beta subunit by a corrinoid iron-sulfur protein (the gamma-delta complex). The protein is Acetyl-CoA decarbonylase/synthase complex subunit beta 2 (cdhC2) of Methanosarcina acetivorans (strain ATCC 35395 / DSM 2834 / JCM 12185 / C2A).